The sequence spans 2174 residues: Mediator of RNA polymerase II transcription subunit 13 (2174 aa).

Position 395 is a phosphoserine (Ser395). The tract at residues 435 to 477 (RNAGQQGQAPSLGQQQQILPKHKTNEKQEKSEKPQKRPLTPFH) is disordered. The segment covering 438–451 (GQQGQAPSLGQQQQ) has biased composition (low complexity). Over residues 457 to 469 (KTNEKQEKSEKPQ) the composition is skewed to basic and acidic residues. Residues Ser500, Ser504, Ser530, and Ser537 each carry the phosphoserine modification. Over residues 709 to 730 (FPDKKDRQNSEREAGKKHKVED) the composition is skewed to basic and acidic residues. 3 disordered regions span residues 709-735 (FPDKKDRQNSEREAGKKHKVEDGTSSV), 749-769 (SPSIKQDAPRPTSHARPPSTS), and 787-816 (FNSDEDELTPGSKKSANGSDDKASCKESKT). Positions 805 to 815 (SDDKASCKESK) are enriched in basic and acidic residues. Phosphoserine occurs at positions 826 and 890. A disordered region spans residues 959–1054 (FIKEGDGSNM…ASTPSTCRPL (96 aa)). The segment covering 992 to 1003 (PPSNSGAGILPS) has biased composition (low complexity). Residues 1004–1015 (PSTPRFPTPRTP) are compositionally biased toward pro residues. Ser1029 is modified (phosphoserine). Residues 1040-1053 (DLYSPASTPSTCRP) are compositionally biased toward polar residues. Short sequence motifs (LXXLL motif) lie at residues 1188-1192 (LILLL) and 1279-1283 (LRMLL). 2 stretches are compositionally biased toward polar residues: residues 1484 to 1498 (SQSLITPPQMTNTGN) and 1563 to 1606 (SMNS…SLPT). Disordered regions lie at residues 1484–1505 (SQSLITPPQMTNTGNANTPSAT), 1557–1617 (SFPP…ESTM), and 2015–2048 (LPASPTGSPVHSPGSHYPHGGDAGKGQSTDRLLS).

It belongs to the Mediator complex subunit 13 family. As to quaternary structure, component of the Mediator complex, which is composed of MED1, MED4, MED6, MED7, MED8, MED9, MED10, MED11, MED12, MED13, MED13L, MED14, MED15, MED16, MED17, MED18, MED19, MED20, MED21, MED22, MED23, MED24, MED25, MED26, MED27, MED29, MED30, MED31, CCNC, CDK8 and CDC2L6/CDK11. The MED12, MED13, CCNC and CDK8 subunits form a distinct module termed the CDK8 module. Mediator containing the CDK8 module is less active than Mediator lacking this module in supporting transcriptional activation. Individual preparations of the Mediator complex lacking one or more distinct subunits have been variously termed ARC, CRSP, DRIP, PC2, SMCC and TRAP. Ubiquitous.

The protein localises to the nucleus. Functionally, component of the Mediator complex, a coactivator involved in the regulated transcription of nearly all RNA polymerase II-dependent genes. Mediator functions as a bridge to convey information from gene-specific regulatory proteins to the basal RNA polymerase II transcription machinery. Mediator is recruited to promoters by direct interactions with regulatory proteins and serves as a scaffold for the assembly of a functional preinitiation complex with RNA polymerase II and the general transcription factors. In Homo sapiens (Human), this protein is Mediator of RNA polymerase II transcription subunit 13.